A 49-amino-acid polypeptide reads, in one-letter code: Small, acid-soluble spore protein O (49 aa).

The tract at residues 1–49 (MGKRKANHTISGMNVASAQGQGTGYNEEFANEPLTPAERQNNKKRKKNQ) is disordered. A compositionally biased stretch (polar residues) spans 8-20 (HTISGMNVASAQG).

It belongs to the SspO family.

The protein resides in the spore core. This Bacillus cereus (strain G9842) protein is Small, acid-soluble spore protein O.